Consider the following 340-residue polypeptide: Proline-rich transmembrane protein 2 (340 aa).

The interval 1–261 (MAASSSEISE…AGPGVEGGEG (261 aa)) is disordered. The Cytoplasmic portion of the chain corresponds to 1–268 (MAASSSEISE…GEGTQKPRDY (268 aa)). S28 carries the post-translational modification Phosphoserine. The residue at position 74 (T74) is a Phosphothreonine. 2 stretches are compositionally biased toward pro residues: residues 131–155 (PPEPAPEPAPQPDPQPDSQPTPKPA) and 197–207 (APEPHSPPSKK). S238 carries the phosphoserine modification. R240 carries the omega-N-methylarginine modification. A phosphoserine mark is found at S248 and S249. The segment at residues 269-289 (IILAILSCFCPMWPVNIVAFA) is an intramembrane region (helical). Residues 290 to 317 (YAVMSRNSLQQGDVDGAQRLGRVAKLLS) are Cytoplasmic-facing. Residues 318–338 (IVALVGGVLIIIASCVINLGV) traverse the membrane as a helical segment. The Extracellular segment spans residues 339 to 340 (YK).

Belongs to the CD225/Dispanin family. In terms of assembly, component of the outer core of AMPAR complex. AMPAR complex consists of an inner core made of 4 pore-forming GluA/GRIA proteins (GRIA1, GRIA2, GRIA3 and GRIA4) and 4 major auxiliary subunits arranged in a twofold symmetry. One of the two pairs of distinct binding sites is occupied either by CNIH2, CNIH3 or CACNG2, CACNG3. The other harbors CACNG2, CACNG3, CACNG4, CACNG8 or GSG1L. This inner core of AMPAR complex is complemented by outer core constituents binding directly to the GluA/GRIA proteins at sites distinct from the interaction sites of the inner core constituents. Outer core constituents include at least PRRT1, PRRT2, CKAMP44/SHISA9, FRRS1L and NRN1. The proteins of the inner and outer core serve as a platform for other, more peripherally associated AMPAR constituents. Alone or in combination, these auxiliary subunits control the gating and pharmacology of the AMPAR complex and profoundly impact their biogenesis and protein processing. Interacts with intersectin 1/ITSN1. Interacts with SNARE complex components, including SNAP25, STX1A, SYT1 and SYT2; this interaction may inhibit SNARE complex formation.

The protein localises to the cell membrane. It localises to the presynaptic cell membrane. It is found in the synapse. The protein resides in the cell projection. Its subcellular location is the axon. The protein localises to the cytoplasmic vesicle. It localises to the secretory vesicle. It is found in the synaptic vesicle membrane. The protein resides in the postsynaptic density membrane. Its subcellular location is the dendritic spine. In terms of biological role, as a component of the outer core of AMPAR complex, may be involved in synaptic transmission in the central nervous system. In hippocampal neurons, in presynaptic terminals, plays an important role in the final steps of neurotransmitter release, possibly by regulating Ca(2+)-sensing. In the cerebellum, may inhibit SNARE complex formation and down-regulate short-term facilitation. The sequence is that of Proline-rich transmembrane protein 2 (PRRT2) from Pongo abelii (Sumatran orangutan).